The following is a 173-amino-acid chain: MYSFMGGGLFCAWVGTILLVVATATDHWMQYRLSGSFAHQGLWRYCLGNKCFLQTESIAYWNATRAFMILSALCATSGIIMGVLAFAQQSTFTRLSRPFSAGIMFFASTLFVLLALAIYTGVTVSFLGRRFGDWRFSWSYILGWVALLMTFFAGIFYMCAYRMHECRRLATPR.

At 1-3 (MYS) the chain is on the cytoplasmic side. A helical membrane pass occupies residues 4–24 (FMGGGLFCAWVGTILLVVATA). Over 25 to 66 (TDHWMQYRLSGSFAHQGLWRYCLGNKCFLQTESIAYWNATRA) the chain is Extracellular. C-linked (Man) tryptophan glycans are attached at residues Trp43 and Trp61. Residue Asn62 is glycosylated (N-linked (GlcNAc...) asparagine). The chain crosses the membrane as a helical span at residues 67-87 (FMILSALCATSGIIMGVLAFA). Residues 88 to 98 (QQSTFTRLSRP) are Cytoplasmic-facing. The chain crosses the membrane as a helical span at residues 99–119 (FSAGIMFFASTLFVLLALAIY). Residues 120–140 (TGVTVSFLGRRFGDWRFSWSY) are Extracellular-facing. Residues 141 to 161 (ILGWVALLMTFFAGIFYMCAY) traverse the membrane as a helical segment. The Cytoplasmic segment spans residues 162-173 (RMHECRRLATPR). Position 171 is a phosphothreonine (Thr171).

The protein belongs to the PMP-22/EMP/MP20 family. Seems to be associated with itself or another lens membrane component via disulfide bonds.

It is found in the membrane. In terms of biological role, present in the thicker 16-17 nm junctions of mammalian lens fiber cells, where it may contribute to cell junctional organization. Acts as a receptor for calmodulin. May play an important role in both lens development and cataractogenesis. The sequence is that of Lens fiber membrane intrinsic protein (Lim2) from Mus musculus (Mouse).